The sequence spans 342 residues: Biotin synthase (342 aa).

The Radical SAM core domain maps to 55 to 274 (NAVQCNQLLN…IALARIMMPK (220 aa)). Residues Cys70, Cys74, and Cys77 each contribute to the [4Fe-4S] cluster site. Residues Cys114, Cys145, Cys205, and Arg278 each contribute to the [2Fe-2S] cluster site.

It belongs to the radical SAM superfamily. Biotin synthase family. Homodimer. [4Fe-4S] cluster serves as cofactor. Requires [2Fe-2S] cluster as cofactor.

The catalysed reaction is (4R,5S)-dethiobiotin + (sulfur carrier)-SH + 2 reduced [2Fe-2S]-[ferredoxin] + 2 S-adenosyl-L-methionine = (sulfur carrier)-H + biotin + 2 5'-deoxyadenosine + 2 L-methionine + 2 oxidized [2Fe-2S]-[ferredoxin]. Its pathway is cofactor biosynthesis; biotin biosynthesis; biotin from 7,8-diaminononanoate: step 2/2. Functionally, catalyzes the conversion of dethiobiotin (DTB) to biotin by the insertion of a sulfur atom into dethiobiotin via a radical-based mechanism. The chain is Biotin synthase from Rhodopseudomonas palustris (strain BisB5).